The primary structure comprises 840 residues: Protein translocase subunit SecA (840 aa).

ATP-binding positions include Gln-87, 105–109 (GEGKT), and Asp-494. The tract at residues 791–840 (LRKEQEDQPMFFGPAEGAGQKPQTRKDRKVGRNDPCPCGSGKKYKKCCGK) is disordered. Residues Cys-826, Cys-828, Cys-837, and Cys-838 each contribute to the Zn(2+) site.

It belongs to the SecA family. As to quaternary structure, monomer and homodimer. Part of the essential Sec protein translocation apparatus which comprises SecA, SecYEG and auxiliary proteins SecDF-YajC and YidC. Zn(2+) serves as cofactor.

It is found in the cell inner membrane. It localises to the cytoplasm. It carries out the reaction ATP + H2O + cellular proteinSide 1 = ADP + phosphate + cellular proteinSide 2.. In terms of biological role, part of the Sec protein translocase complex. Interacts with the SecYEG preprotein conducting channel. Has a central role in coupling the hydrolysis of ATP to the transfer of proteins into and across the cell membrane, serving as an ATP-driven molecular motor driving the stepwise translocation of polypeptide chains across the membrane. This chain is Protein translocase subunit SecA, found in Syntrophobacter fumaroxidans (strain DSM 10017 / MPOB).